The chain runs to 199 residues: 5'-deoxynucleotidase YfbR (199 aa).

Substrate-binding positions include 18 to 19 (RW) and histidine 33. In terms of domain architecture, HD spans 30–142 (VSEHSLQVAM…VKQADALCAY (113 aa)). Residues histidine 33, histidine 68, and aspartate 69 each contribute to the a divalent metal cation site. Substrate is bound by residues aspartate 69, 77–80 (DLPT), and aspartate 137. Aspartate 137 is a binding site for a divalent metal cation.

Belongs to the 5DNU family. Homodimer. A divalent metal cation serves as cofactor.

The protein localises to the cytoplasm. It catalyses the reaction a 2'-deoxyribonucleoside 5'-phosphate + H2O = a 2'-deoxyribonucleoside + phosphate. Catalyzes the strictly specific dephosphorylation of 2'-deoxyribonucleoside 5'-monophosphates. The chain is 5'-deoxynucleotidase YfbR from Escherichia coli O45:K1 (strain S88 / ExPEC).